The chain runs to 273 residues: Large ribosomal subunit protein uL2 (273 aa).

The tract at residues 221–262 (RGTAMNPVDHPHGGGEGRNFGKHPVTPWGVQTKGKKTRHNKR) is disordered. Over residues 253 to 262 (KGKKTRHNKR) the composition is skewed to basic residues.

This sequence belongs to the universal ribosomal protein uL2 family. Part of the 50S ribosomal subunit. Forms a bridge to the 30S subunit in the 70S ribosome.

Its function is as follows. One of the primary rRNA binding proteins. Required for association of the 30S and 50S subunits to form the 70S ribosome, for tRNA binding and peptide bond formation. It has been suggested to have peptidyltransferase activity; this is somewhat controversial. Makes several contacts with the 16S rRNA in the 70S ribosome. The chain is Large ribosomal subunit protein uL2 from Haemophilus influenzae (strain ATCC 51907 / DSM 11121 / KW20 / Rd).